The primary structure comprises 187 residues: Potassium-transporting ATPase KdpC subunit (187 aa).

A helical membrane pass occupies residues 10–30 (LVAATMLICVAGYSAAVWAVG).

It belongs to the KdpC family. As to quaternary structure, the system is composed of three essential subunits: KdpA, KdpB and KdpC.

It localises to the cell inner membrane. Its function is as follows. Part of the high-affinity ATP-driven potassium transport (or Kdp) system, which catalyzes the hydrolysis of ATP coupled with the electrogenic transport of potassium into the cytoplasm. This subunit acts as a catalytic chaperone that increases the ATP-binding affinity of the ATP-hydrolyzing subunit KdpB by the formation of a transient KdpB/KdpC/ATP ternary complex. This is Potassium-transporting ATPase KdpC subunit from Parvibaculum lavamentivorans (strain DS-1 / DSM 13023 / NCIMB 13966).